The following is a 268-amino-acid chain: 4-hydroxy-tetrahydrodipicolinate reductase (268 aa).

NAD(+)-binding positions include 10–15, E36, 99–101, and 123–126; these read GSTGRM, GTT, and APNM. The active-site Proton donor/acceptor is the H156. H157 is a binding site for (S)-2,3,4,5-tetrahydrodipicolinate. The active-site Proton donor is the K160. Residue 166–167 participates in (S)-2,3,4,5-tetrahydrodipicolinate binding; it reads GT.

The protein belongs to the DapB family.

The protein localises to the cytoplasm. It catalyses the reaction (S)-2,3,4,5-tetrahydrodipicolinate + NAD(+) + H2O = (2S,4S)-4-hydroxy-2,3,4,5-tetrahydrodipicolinate + NADH + H(+). The catalysed reaction is (S)-2,3,4,5-tetrahydrodipicolinate + NADP(+) + H2O = (2S,4S)-4-hydroxy-2,3,4,5-tetrahydrodipicolinate + NADPH + H(+). It participates in amino-acid biosynthesis; L-lysine biosynthesis via DAP pathway; (S)-tetrahydrodipicolinate from L-aspartate: step 4/4. Functionally, catalyzes the conversion of 4-hydroxy-tetrahydrodipicolinate (HTPA) to tetrahydrodipicolinate. The chain is 4-hydroxy-tetrahydrodipicolinate reductase from Nitrosomonas europaea (strain ATCC 19718 / CIP 103999 / KCTC 2705 / NBRC 14298).